We begin with the raw amino-acid sequence, 112 residues long: MESKACAKFIRVSPRKARLIASNVKGKTVELAMNILKFTPNKSAGIILGVMRSALANAEHNAKLDVDTLIVKEVIVNEGPTWKRFMPRAQGRATHIRKRSSHISVVLSEGQE.

This sequence belongs to the universal ribosomal protein uL22 family. In terms of assembly, part of the 50S ribosomal subunit.

In terms of biological role, this protein binds specifically to 23S rRNA; its binding is stimulated by other ribosomal proteins, e.g. L4, L17, and L20. It is important during the early stages of 50S assembly. It makes multiple contacts with different domains of the 23S rRNA in the assembled 50S subunit and ribosome. Its function is as follows. The globular domain of the protein is located near the polypeptide exit tunnel on the outside of the subunit, while an extended beta-hairpin is found that lines the wall of the exit tunnel in the center of the 70S ribosome. The protein is Large ribosomal subunit protein uL22 of Lawsonia intracellularis (strain PHE/MN1-00).